Reading from the N-terminus, the 158-residue chain is uncharacterized protein (158 aa).

The FPG-type zinc finger occupies 109–143; sequence RVHARTGLPCPVCGDTVREVSFADKSFQYCPTCQT.

This is an uncharacterized protein from Mycobacterium tuberculosis (strain ATCC 25618 / H37Rv).